Consider the following 426-residue polypeptide: Serine--tRNA ligase (426 aa).

L-serine is bound at residue 233–235 (TAE). Residue 264–266 (RSE) coordinates ATP. E287 is an L-serine binding site. Residue 351 to 354 (EISS) coordinates ATP. L-serine is bound at residue S387.

This sequence belongs to the class-II aminoacyl-tRNA synthetase family. Type-1 seryl-tRNA synthetase subfamily. In terms of assembly, homodimer. The tRNA molecule binds across the dimer.

The protein resides in the cytoplasm. It carries out the reaction tRNA(Ser) + L-serine + ATP = L-seryl-tRNA(Ser) + AMP + diphosphate + H(+). It catalyses the reaction tRNA(Sec) + L-serine + ATP = L-seryl-tRNA(Sec) + AMP + diphosphate + H(+). It participates in aminoacyl-tRNA biosynthesis; selenocysteinyl-tRNA(Sec) biosynthesis; L-seryl-tRNA(Sec) from L-serine and tRNA(Sec): step 1/1. Functionally, catalyzes the attachment of serine to tRNA(Ser). Is also able to aminoacylate tRNA(Sec) with serine, to form the misacylated tRNA L-seryl-tRNA(Sec), which will be further converted into selenocysteinyl-tRNA(Sec). This is Serine--tRNA ligase from Pseudomonas savastanoi pv. phaseolicola (strain 1448A / Race 6) (Pseudomonas syringae pv. phaseolicola (strain 1448A / Race 6)).